The sequence spans 459 residues: Glutamyl-tRNA reductase (459 aa).

Residues 47-50 (TCNR), Ser-140, 145-147 (EPQ), and Gln-151 contribute to the substrate site. The Nucleophile role is filled by Cys-48. NADP(+) is bound at residue 220 to 225 (AAGEMN).

The protein belongs to the glutamyl-tRNA reductase family. As to quaternary structure, homodimer.

The catalysed reaction is (S)-4-amino-5-oxopentanoate + tRNA(Glu) + NADP(+) = L-glutamyl-tRNA(Glu) + NADPH + H(+). It participates in porphyrin-containing compound metabolism; protoporphyrin-IX biosynthesis; 5-aminolevulinate from L-glutamyl-tRNA(Glu): step 1/2. Catalyzes the NADPH-dependent reduction of glutamyl-tRNA(Glu) to glutamate 1-semialdehyde (GSA). The protein is Glutamyl-tRNA reductase of Psychrobacter arcticus (strain DSM 17307 / VKM B-2377 / 273-4).